The chain runs to 373 residues: Peptide chain release factor 1-like, mitochondrial (373 aa).

The transit peptide at 1 to 25 (MRSGFLSGARRLWARRAFSRTPPPS) directs the protein to the mitochondrion. A coiled-coil region spans residues 56 to 110 (QLAAAARLLSEKERELRDTESLLHDENEDLKKLAESEIALCQKQITELKHQIISL). Residues 229 to 293 (PKDLRIDTKR…LRARLYSMHL (65 aa)) are GGQ domain. Positions 243 to 245 (GGQ) match the GGQ motif. Q245 is modified (N5-methylglutamine).

Belongs to the prokaryotic/mitochondrial release factor family. In terms of processing, methylation of glutamine in the GGQ triplet by HEMK1 is conserved from bacteria to mammals.

It is found in the mitochondrion. Mitochondrial peptide chain release factor that directs the termination of translation in response to the peptide chain termination codons UAA and UAG. This Mus musculus (Mouse) protein is Peptide chain release factor 1-like, mitochondrial (Mtrf1l).